Consider the following 376-residue polypeptide: Phytanoyl-CoA hydroxylase-interacting protein-like (376 aa).

The Fibronectin type-III domain occupies 52–161; the sequence is VPHNIKISNI…EIIEFCTADY (110 aa).

This sequence belongs to the PHYHIP family.

Its function is as follows. May play a role in the development of the central system. In Xenopus laevis (African clawed frog), this protein is Phytanoyl-CoA hydroxylase-interacting protein-like (phyhipl).